The chain runs to 716 residues: Epidermal growth factor receptor kinase substrate 8-like protein 2 (716 aa).

2 disordered regions span residues 1-25 (MSQS…DGVA) and 182-243 (PQTL…SQEE). The PID domain maps to 46–202 (MHETSQYHVQ…RQRQSILPPP (157 aa)). The span at 199–208 (LPPPQGPAPI) shows a compositional bias: pro residues. Residues 234 to 243 (GFRRRESQEE) are compositionally biased toward basic and acidic residues. The residue at position 240 (serine 240) is a Phosphoserine. A Phosphothreonine modification is found at threonine 304. The segment at 449–488 (VSPVSRQSIRNSQKHSPTSEPTPPGDALPPVSSPHTHRGY) is disordered. Phosphoserine is present on serine 450. Over residues 452-467 (VSRQSIRNSQKHSPTS) the composition is skewed to polar residues. Residue threonine 470 is modified to Phosphothreonine. Positions 493-552 (AMAKYVKILYDFTARNANELSVLKDEVLEVLEDGRQWWKLRSRSGQAGYVPCNILGEARP) constitute an SH3 domain. Position 571 is a phosphoserine (serine 571).

The protein belongs to the EPS8 family. Interacts with ABI1. Part of a complex that contains SOS1, ABI1 and EPS8L2. Associates with F-actin.

It is found in the cytoplasm. It localises to the cell projection. The protein localises to the stereocilium. Stimulates guanine exchange activity of SOS1. May play a role in membrane ruffling and remodeling of the actin cytoskeleton. In the cochlea, is required for stereocilia maintenance in adult hair cells. The sequence is that of Epidermal growth factor receptor kinase substrate 8-like protein 2 (EPS8L2) from Pongo abelii (Sumatran orangutan).